A 107-amino-acid chain; its full sequence is Integration host factor subunit alpha (107 aa).

Belongs to the bacterial histone-like protein family. As to quaternary structure, heterodimer of an alpha and a beta chain.

Its function is as follows. This protein is one of the two subunits of integration host factor, a specific DNA-binding protein that functions in genetic recombination as well as in transcriptional and translational control. The chain is Integration host factor subunit alpha from Mesorhizobium japonicum (strain LMG 29417 / CECT 9101 / MAFF 303099) (Mesorhizobium loti (strain MAFF 303099)).